Reading from the N-terminus, the 245-residue chain is MTFTASSSSCAITESPVVVALDYHERDKALAFVDKIDPRDCRLKVGKEMFTLFGPQLVRDLQQRGFDVFLDLKFHDIPNTTARAVAAAADLGVWMVNVHASGGARMMAAARDALAPFSKDAPLLIAVTVLTSMGTSDLHDLGVTLSPAEHAERLARLTQQCGLDGVVCSAQEAVRFKQAFGAAFKLVTPGIRPAGSEAGDQRRIMTPEQALSAGVDYMVIGRPVTQSVDPAQTLKDINASLKREA.

Substrate is bound by residues D22, K44, 71–80 (DLKFHDIPNT), T131, R192, Q201, G221, and R222. K73 acts as the Proton donor in catalysis.

The protein belongs to the OMP decarboxylase family. Type 1 subfamily. In terms of assembly, homodimer.

The catalysed reaction is orotidine 5'-phosphate + H(+) = UMP + CO2. Its pathway is pyrimidine metabolism; UMP biosynthesis via de novo pathway; UMP from orotate: step 2/2. Catalyzes the decarboxylation of orotidine 5'-monophosphate (OMP) to uridine 5'-monophosphate (UMP). The polypeptide is Orotidine 5'-phosphate decarboxylase (Salmonella typhi).